Here is a 390-residue protein sequence, read N- to C-terminus: LL-diaminopimelate aminotransferase 2 (390 aa).

Residues Tyr-13 and Gly-38 each contribute to the substrate site. Residues Tyr-67, 102-103 (SK), Tyr-127, Asn-177, Tyr-208, and 236-238 (SLS) each bind pyridoxal 5'-phosphate. Substrate contacts are provided by Lys-103, Tyr-127, and Asn-177. Lys-239 bears the N6-(pyridoxal phosphate)lysine mark. Residue Arg-247 participates in pyridoxal 5'-phosphate binding. Residue Arg-365 coordinates substrate.

The protein belongs to the class-I pyridoxal-phosphate-dependent aminotransferase family. LL-diaminopimelate aminotransferase subfamily. Homodimer. Pyridoxal 5'-phosphate serves as cofactor.

It carries out the reaction (2S,6S)-2,6-diaminopimelate + 2-oxoglutarate = (S)-2,3,4,5-tetrahydrodipicolinate + L-glutamate + H2O + H(+). It functions in the pathway amino-acid biosynthesis; L-lysine biosynthesis via DAP pathway; LL-2,6-diaminopimelate from (S)-tetrahydrodipicolinate (aminotransferase route): step 1/1. Functionally, involved in the synthesis of meso-diaminopimelate (m-DAP or DL-DAP), required for both lysine and peptidoglycan biosynthesis. Catalyzes the direct conversion of tetrahydrodipicolinate to LL-diaminopimelate. This Trichormus variabilis (strain ATCC 29413 / PCC 7937) (Anabaena variabilis) protein is LL-diaminopimelate aminotransferase 2.